Reading from the N-terminus, the 320-residue chain is ATP-dependent 6-phosphofructokinase isozyme 1 (320 aa).

An ATP-binding site is contributed by glycine 12. Residues 22-26 (RGVVR) and 55-60 (RYSVSD) each bind ADP. Residues 73 to 74 (RF) and 103 to 106 (GDGS) contribute to the ATP site. Aspartate 104 is a binding site for Mg(2+). Residue 126–128 (TID) participates in substrate binding. Aspartate 128 functions as the Proton acceptor in the catalytic mechanism. An ADP-binding site is contributed by arginine 155. Residues arginine 163 and 170-172 (MGR) contribute to the substrate site. Residues 186–188 (GCE), lysine 212, and 214–216 (KKH) each bind ADP. Substrate is bound by residues glutamate 223, arginine 244, and 250–253 (HIQR).

It belongs to the phosphofructokinase type A (PFKA) family. ATP-dependent PFK group I subfamily. Prokaryotic clade 'B1' sub-subfamily. As to quaternary structure, homotetramer. Mg(2+) is required as a cofactor.

The protein resides in the cytoplasm. It carries out the reaction beta-D-fructose 6-phosphate + ATP = beta-D-fructose 1,6-bisphosphate + ADP + H(+). It functions in the pathway carbohydrate degradation; glycolysis; D-glyceraldehyde 3-phosphate and glycerone phosphate from D-glucose: step 3/4. With respect to regulation, allosterically activated by ADP and other diphosphonucleosides, and allosterically inhibited by phosphoenolpyruvate. Its function is as follows. Catalyzes the phosphorylation of D-fructose 6-phosphate to fructose 1,6-bisphosphate by ATP, the first committing step of glycolysis. This is ATP-dependent 6-phosphofructokinase isozyme 1 from Shigella boydii serotype 18 (strain CDC 3083-94 / BS512).